The following is a 454-amino-acid chain: Ribosomal protein uS12 methylthiotransferase RimO (454 aa).

An MTTase N-terminal domain is found at 14–125 (SKIAFSHVGC…IAKVLDRVEK (112 aa)). Residues Cys23, Cys59, Cys88, Cys163, Cys167, and Cys170 each contribute to the [4Fe-4S] cluster site. Positions 149 to 378 (DKNKFVAYLR…ISVQQNISRE (230 aa)) constitute a Radical SAM core domain. In terms of domain architecture, TRAM spans 381-452 (QIYVGSKMKI…EYDLYGETIK (72 aa)).

It belongs to the methylthiotransferase family. RimO subfamily. Requires [4Fe-4S] cluster as cofactor.

The protein localises to the cytoplasm. The catalysed reaction is L-aspartate(89)-[ribosomal protein uS12]-hydrogen + (sulfur carrier)-SH + AH2 + 2 S-adenosyl-L-methionine = 3-methylsulfanyl-L-aspartate(89)-[ribosomal protein uS12]-hydrogen + (sulfur carrier)-H + 5'-deoxyadenosine + L-methionine + A + S-adenosyl-L-homocysteine + 2 H(+). Catalyzes the methylthiolation of an aspartic acid residue of ribosomal protein uS12. The chain is Ribosomal protein uS12 methylthiotransferase RimO from Prochlorococcus marinus (strain MIT 9301).